We begin with the raw amino-acid sequence, 208 residues long: Small ribosomal subunit protein uS4 (208 aa).

Residues 24–52 (GVKPFDVKTKKANKAPGQHGQARGGKQSE) are disordered. One can recognise an S4 RNA-binding domain in the interval 98 to 160 (SRLDNVVYRM…AKQQLRIKNA (63 aa)).

The protein belongs to the universal ribosomal protein uS4 family. As to quaternary structure, part of the 30S ribosomal subunit. Contacts protein S5. The interaction surface between S4 and S5 is involved in control of translational fidelity.

One of the primary rRNA binding proteins, it binds directly to 16S rRNA where it nucleates assembly of the body of the 30S subunit. In terms of biological role, with S5 and S12 plays an important role in translational accuracy. In Acinetobacter baumannii (strain ACICU), this protein is Small ribosomal subunit protein uS4.